A 503-amino-acid chain; its full sequence is ATP synthase subunit alpha (503 aa).

170–177 (GDRQTGKT) lines the ATP pocket.

This sequence belongs to the ATPase alpha/beta chains family. In terms of assembly, F-type ATPases have 2 components, CF(1) - the catalytic core - and CF(0) - the membrane proton channel. CF(1) has five subunits: alpha(3), beta(3), gamma(1), delta(1), epsilon(1). CF(0) has three main subunits: a(1), b(2) and c(9-12). The alpha and beta chains form an alternating ring which encloses part of the gamma chain. CF(1) is attached to CF(0) by a central stalk formed by the gamma and epsilon chains, while a peripheral stalk is formed by the delta and b chains.

The protein localises to the cell membrane. It carries out the reaction ATP + H2O + 4 H(+)(in) = ADP + phosphate + 5 H(+)(out). Functionally, produces ATP from ADP in the presence of a proton gradient across the membrane. The alpha chain is a regulatory subunit. The chain is ATP synthase subunit alpha from Brevibacillus brevis (strain 47 / JCM 6285 / NBRC 100599).